The following is a 428-amino-acid chain: Serine--tRNA ligase (428 aa).

231–233 contributes to the L-serine binding site; sequence TSE. ATP-binding positions include 262 to 264 and V278; that span reads RRE. E285 lines the L-serine pocket. 349–352 provides a ligand contact to ATP; the sequence is ELTS. T384 is an L-serine binding site.

It belongs to the class-II aminoacyl-tRNA synthetase family. Type-1 seryl-tRNA synthetase subfamily. In terms of assembly, homodimer. The tRNA molecule binds across the dimer.

It is found in the cytoplasm. The enzyme catalyses tRNA(Ser) + L-serine + ATP = L-seryl-tRNA(Ser) + AMP + diphosphate + H(+). The catalysed reaction is tRNA(Sec) + L-serine + ATP = L-seryl-tRNA(Sec) + AMP + diphosphate + H(+). The protein operates within aminoacyl-tRNA biosynthesis; selenocysteinyl-tRNA(Sec) biosynthesis; L-seryl-tRNA(Sec) from L-serine and tRNA(Sec): step 1/1. Functionally, catalyzes the attachment of serine to tRNA(Ser). Is also able to aminoacylate tRNA(Sec) with serine, to form the misacylated tRNA L-seryl-tRNA(Sec), which will be further converted into selenocysteinyl-tRNA(Sec). The protein is Serine--tRNA ligase of Bifidobacterium longum subsp. infantis (strain ATCC 15697 / DSM 20088 / JCM 1222 / NCTC 11817 / S12).